The primary structure comprises 1232 residues: Chromosome-associated kinesin KIF4A (1232 aa).

Residues 9-336 form the Kinesin motor domain; the sequence is PVRVALRCRP…LRYADRARKI (328 aa). 88–95 lines the ATP pocket; it reads GQTGSGKT. Residues 350–999 are a coiled coil; the sequence is ELNHLKQQVQ…IKQKLTLLQV (650 aa). A Phosphoserine modification is found at Ser394. The tract at residues 496–515 is disordered; sequence AQVETSPETSRSSDAFTTQH. Polar residues predominate over residues 497–515; that stretch reads QVETSPETSRSSDAFTTQH. The required for the interaction with PRC1 stretch occupies residues 663–1232; the sequence is QWKQKKDKEV…GCSPIEEEAH (570 aa). The Nuclear localization signal motif lies at 793 to 798; it reads PKLRRR. Position 799 is a phosphothreonine (Thr799). Residues Ser801, Ser810, Ser815, and Ser951 each carry the phosphoserine modification. Thr995 is subject to Phosphothreonine. Residues 1000-1232 are globular; the sequence is ASRQKHLPKD…GCSPIEEEAH (233 aa). Ser1001, Ser1013, Ser1017, Ser1028, and Ser1126 each carry phosphoserine. Residues 1086-1144 are CRD; required for [4Fe-4S] cluster binding and localization to the spindle midzone and midbody during anaphase and telophase; sequence CSCKGWCGNKQCGCRKQKSDCGVDCCCDPTKCRNRQQGKDSLGTVERTQDSEGSFKLED. The segment at 1122 to 1142 is disordered; the sequence is QGKDSLGTVERTQDSEGSFKL. Residues 1132–1142 are compositionally biased toward basic and acidic residues; the sequence is RTQDSEGSFKL. Thr1181 bears the Phosphothreonine mark. Ser1186 bears the Phosphoserine mark. Residue Lys1194 forms a Glycyl lysine isopeptide (Lys-Gly) (interchain with G-Cter in SUMO2) linkage. A Phosphoserine modification is found at Ser1225.

This sequence belongs to the TRAFAC class myosin-kinesin ATPase superfamily. Kinesin family. Chromokinesin subfamily. As to quaternary structure, interacts with the cytosolic iron-sulfur protein assembly (CIA) complex components CIAO2B and MMS19; the interactions facilitate the transfer of Fe-S clusters to KIF4A to ensure proper localization of KIF4A to mitotic machinery components. Interacts (via C-terminus) with unphosphorylated PRC1 (via N-terminus); the interaction is required for the progression of mitosis. Requires [2Fe-2S] cluster as cofactor. The cofactor is [4Fe-4S] cluster. As to expression, highly expressed in hematopoietic tissues, fetal liver, spleen, thymus and adult thymus and bone marrow. Lower levels are found in heart, testis, kidney, colon and lung.

It is found in the nucleus matrix. It localises to the cytoplasm. The protein localises to the cytoskeleton. Its subcellular location is the spindle. The protein resides in the midbody. It is found in the chromosome. Its function is as follows. Iron-sulfur (Fe-S) cluster binding motor protein that has a role in chromosome segregation during mitosis. Translocates PRC1 to the plus ends of interdigitating spindle microtubules during the metaphase to anaphase transition, an essential step for the formation of an organized central spindle midzone and midbody and for successful cytokinesis. May play a role in mitotic chromosomal positioning and bipolar spindle stabilization. This is Chromosome-associated kinesin KIF4A (KIF4A) from Homo sapiens (Human).